Reading from the N-terminus, the 150-residue chain is Placenta-specific protein 4 (150 aa).

In terms of tissue distribution, expressed in placental syncytiotrophoblast and choriocarcinoma cells.

This Homo sapiens (Human) protein is Placenta-specific protein 4 (PLAC4).